The sequence spans 242 residues: Uridylate kinase (242 aa).

Residues 15-18, G58, and R62 contribute to the ATP site; that span reads KISG. Residues D77 and 139–146 each bind UMP; that span reads TGNPFFTT. Residues T166, Y172, and D175 each coordinate ATP.

The protein belongs to the UMP kinase family. As to quaternary structure, homohexamer.

It is found in the cytoplasm. The enzyme catalyses UMP + ATP = UDP + ADP. Its pathway is pyrimidine metabolism; CTP biosynthesis via de novo pathway; UDP from UMP (UMPK route): step 1/1. Its activity is regulated as follows. Inhibited by UTP. Functionally, catalyzes the reversible phosphorylation of UMP to UDP. This is Uridylate kinase from Buchnera aphidicola subsp. Acyrthosiphon pisum (strain APS) (Acyrthosiphon pisum symbiotic bacterium).